The following is a 352-amino-acid chain: Tropomodulin-3 (352 aa).

The residue at position 25 (serine 25) is a Phosphoserine.

The protein belongs to the tropomodulin family. In terms of assembly, binds to the N-terminus of tropomyosin and to actin. Interacts with FLII. In terms of tissue distribution, ubiquitous.

The protein resides in the cytoplasm. The protein localises to the cytoskeleton. In terms of biological role, blocks the elongation and depolymerization of the actin filaments at the pointed end. The Tmod/TM complex contributes to the formation of the short actin protofilament, which in turn defines the geometry of the membrane skeleton. This is Tropomodulin-3 (Tmod3) from Mus musculus (Mouse).